The primary structure comprises 54 residues: ATP synthase protein 8 (54 aa).

The chain crosses the membrane as a helical span at residues 8–28; the sequence is WWIINFFIIWTAILLTLVILV.

The protein belongs to the ATPase protein 8 family. F-type ATPases have 2 components, CF(1) - the catalytic core - and CF(0) - the membrane proton channel.

It is found in the mitochondrion membrane. Mitochondrial membrane ATP synthase (F(1)F(0) ATP synthase or Complex V) produces ATP from ADP in the presence of a proton gradient across the membrane which is generated by electron transport complexes of the respiratory chain. F-type ATPases consist of two structural domains, F(1) - containing the extramembraneous catalytic core and F(0) - containing the membrane proton channel, linked together by a central stalk and a peripheral stalk. During catalysis, ATP synthesis in the catalytic domain of F(1) is coupled via a rotary mechanism of the central stalk subunits to proton translocation. Part of the complex F(0) domain. Minor subunit located with subunit a in the membrane. The chain is ATP synthase protein 8 (MT-ATP8) from Paracentrotus lividus (Common sea urchin).